The following is a 388-amino-acid chain: tRNA-specific 2-thiouridylase MnmA (388 aa).

Residues 26–33 and Leu-52 contribute to the ATP site; that span reads GLSGGVDS. The active-site Nucleophile is the Cys-113. An intrachain disulfide couples Cys-113 to Cys-223. Gly-138 is a binding site for ATP. Residues 173–175 are interaction with tRNA; it reads KDQ. Cys-223 acts as the Cysteine persulfide intermediate in catalysis. An interaction with tRNA region spans residues 328–329; the sequence is RY.

It belongs to the MnmA/TRMU family.

The protein localises to the cytoplasm. It catalyses the reaction S-sulfanyl-L-cysteinyl-[protein] + uridine(34) in tRNA + AH2 + ATP = 2-thiouridine(34) in tRNA + L-cysteinyl-[protein] + A + AMP + diphosphate + H(+). Its function is as follows. Catalyzes the 2-thiolation of uridine at the wobble position (U34) of tRNA, leading to the formation of s(2)U34. In Prochlorococcus marinus (strain NATL2A), this protein is tRNA-specific 2-thiouridylase MnmA.